The following is a 441-amino-acid chain: Xaa-Pro dipeptidase (441 aa).

Residues Asp244, Asp255, His336, Glu381, and Glu420 each contribute to the Mn(2+) site.

It belongs to the peptidase M24B family. Bacterial-type prolidase subfamily. Mn(2+) serves as cofactor.

It catalyses the reaction Xaa-L-Pro dipeptide + H2O = an L-alpha-amino acid + L-proline. Functionally, splits dipeptides with a prolyl residue in the C-terminal position. This is Xaa-Pro dipeptidase from Xanthomonas axonopodis pv. citri (strain 306).